A 462-amino-acid chain; its full sequence is uncharacterized protein (462 aa).

The segment at 1-108 (MEDSNTNKDI…NGQDDQDEMD (108 aa)) is disordered. Over residues 36 to 51 (TVERILERKQKERESK) the composition is skewed to basic and acidic residues. The segment covering 64 to 95 (SSPSSLLSSPISSNDNNNNNNNNNNESFDINN) has biased composition (low complexity). The stretch at 119–150 (LLKRKAALAAKKKESLAEQMKKYNQQYDSIIS) forms a coiled coil. Residues 188–208 (SKLQSLNNNTSPSTSSSNLID) are disordered. Over residues 190-208 (LQSLNNNTSPSTSSSNLID) the composition is skewed to low complexity.

This is an uncharacterized protein from Dictyostelium discoideum (Social amoeba).